The sequence spans 1020 residues: UPF0182 protein jk1603 (1020 aa).

Residues 1-18 show a composition bias toward pro residues; the sequence is MSTPTPPSSGRPKQPFPS. The interval 1–23 is disordered; that stretch reads MSTPTPPSSGRPKQPFPSSPGSS. 7 consecutive transmembrane segments (helical) span residues 28–48, 73–93, 125–145, 175–195, 227–247, 272–292, and 300–320; these read ILGILVAIIAIAIFIVPVVVS, LVLFVVFGLIGALISWLAAFL, FLVGIPLFVGVITGMIVQSNW, LPFLQMLVSTFSVLLILAFVI, LAVIAGVWMLLKAVGYWFDRY, QIVLLVISIFVAAMFFVTIVL, and LAVALMVGSSLTVGLAWPAML. A disordered region spans residues 924-998; sequence QEIDGSVVDP…KVNKTRESGT (75 aa). Basic and acidic residues-rich tracts occupy residues 942 to 961 and 969 to 998; these read KGDKGKDADKDKKSKDEQSS and KSDDKGTDTAPEQRVRDAMDKVNKTRESGT.

Belongs to the UPF0182 family.

The protein localises to the cell membrane. The chain is UPF0182 protein jk1603 from Corynebacterium jeikeium (strain K411).